The sequence spans 421 residues: Medium-chain specific acyl-CoA dehydrogenase, mitochondrial (421 aa).

The transit peptide at 1 to 25 (MAAGFGRCCRVLRSISRFQWRSQHT) directs the protein to the mitochondrion. N6-acetyllysine; alternate is present on lysine 69. N6-succinyllysine; alternate is present on lysine 69. 158–167 (YCVTEPGAGS) is an FAD binding site. Serine 167 is a binding site for octanoyl-CoA. At lysine 179 the chain carries N6-succinyllysine. FAD is bound at residue 191–193 (WIT). N6-acetyllysine; alternate occurs at positions 212, 217, and 271. Lysine 212, lysine 217, and lysine 271 each carry N6-succinyllysine; alternate. Residue aspartate 278 participates in octanoyl-CoA binding. Lysine 279 carries the N6-acetyllysine modification. Octanoyl-CoA is bound at residue arginine 281. Lysine 301 is modified (N6-acetyllysine). Residues 306–308 (RKT) and 316–317 (HQ) contribute to the FAD site. Residues arginine 349 and threonine 351 each coordinate octanoyl-CoA. Threonine 351 carries the post-translational modification Phosphothreonine. 374–378 (QILGG) is an FAD binding site. Glutamate 401 is an octanoyl-CoA binding site. Residue glutamate 401 is the Proton acceptor of the active site. 402–405 (GTSQ) contacts FAD.

It belongs to the acyl-CoA dehydrogenase family. In terms of assembly, homotetramer. Interacts with the heterodimeric electron transfer flavoprotein ETF. The cofactor is FAD. Acetylated. Could occur at proximity of the cofactor-binding sites and reduce the catalytic activity. Could be deacetylated by SIRT3.

The protein resides in the mitochondrion matrix. It catalyses the reaction a medium-chain 2,3-saturated fatty acyl-CoA + oxidized [electron-transfer flavoprotein] + H(+) = a medium-chain (2E)-enoyl-CoA + reduced [electron-transfer flavoprotein]. The enzyme catalyses pentanoyl-CoA + oxidized [electron-transfer flavoprotein] + H(+) = (2E)-pentenoyl-CoA + reduced [electron-transfer flavoprotein]. The catalysed reaction is hexanoyl-CoA + oxidized [electron-transfer flavoprotein] + H(+) = (2E)-hexenoyl-CoA + reduced [electron-transfer flavoprotein]. It carries out the reaction octanoyl-CoA + oxidized [electron-transfer flavoprotein] + H(+) = (2E)-octenoyl-CoA + reduced [electron-transfer flavoprotein]. It catalyses the reaction decanoyl-CoA + oxidized [electron-transfer flavoprotein] + H(+) = (2E)-decenoyl-CoA + reduced [electron-transfer flavoprotein]. The enzyme catalyses dodecanoyl-CoA + oxidized [electron-transfer flavoprotein] + H(+) = (2E)-dodecenoyl-CoA + reduced [electron-transfer flavoprotein]. The catalysed reaction is tetradecanoyl-CoA + oxidized [electron-transfer flavoprotein] + H(+) = (2E)-tetradecenoyl-CoA + reduced [electron-transfer flavoprotein]. It carries out the reaction oxidized [electron-transfer flavoprotein] + hexadecanoyl-CoA + H(+) = (2E)-hexadecenoyl-CoA + reduced [electron-transfer flavoprotein]. Its pathway is lipid metabolism; mitochondrial fatty acid beta-oxidation. Its function is as follows. Medium-chain specific acyl-CoA dehydrogenase is one of the acyl-CoA dehydrogenases that catalyze the first step of mitochondrial fatty acid beta-oxidation, an aerobic process breaking down fatty acids into acetyl-CoA and allowing the production of energy from fats. The first step of fatty acid beta-oxidation consists in the removal of one hydrogen from C-2 and C-3 of the straight-chain fatty acyl-CoA thioester, resulting in the formation of trans-2-enoyl-CoA. Electron transfer flavoprotein (ETF) is the electron acceptor that transfers electrons to the main mitochondrial respiratory chain via ETF-ubiquinone oxidoreductase (ETF dehydrogenase). Among the different mitochondrial acyl-CoA dehydrogenases, medium-chain specific acyl-CoA dehydrogenase acts specifically on acyl-CoAs with saturated 6 to 12 carbons long primary chains. This is Medium-chain specific acyl-CoA dehydrogenase, mitochondrial from Pan troglodytes (Chimpanzee).